The following is a 216-amino-acid chain: Fibroblast growth factor 19 (216 aa).

The first 24 residues, 1–24, serve as a signal peptide directing secretion; sequence MRSGCVVVHVWILAGLWLAVAGRP. 2 disulfides stabilise this stretch: cysteine 58/cysteine 70 and cysteine 102/cysteine 120.

This sequence belongs to the heparin-binding growth factors family. As to quaternary structure, interacts with FGFR1, FGFR2, FGFR3 and FGFR4. Affinity between fibroblast growth factors (FGFs) and their receptors is increased by KL, KLB and heparan sulfate glycosaminoglycans that function as coreceptors. Interacts with KL; this interaction is direct. Interacts with KLB; this interaction is direct. Interacts with FGFR4 in the presence of heparin, KL or KLB. Interacts with MALRD1. As to expression, expressed in fetal brain, cartilage, retina, and adult gall bladder.

It is found in the secreted. Involved in the suppression of bile acid biosynthesis through down-regulation of CYP7A1 expression, following positive regulation of the JNK and ERK1/2 cascades. Stimulates glucose uptake in adipocytes. Activity requires the presence of KLB and FGFR4. In Homo sapiens (Human), this protein is Fibroblast growth factor 19 (FGF19).